A 450-amino-acid polypeptide reads, in one-letter code: Putative serine/threonine-protein kinase R517/R518 (450 aa).

Residues 9-290 (KMTDTVLGKG…WSELFHHYWF (282 aa)) enclose the Protein kinase domain. Residues 15–23 (LGKGGFSEV) and Lys38 contribute to the ATP site. The Proton acceptor role is filled by Asp140.

It belongs to the protein kinase superfamily. Ser/Thr protein kinase family.

The catalysed reaction is L-seryl-[protein] + ATP = O-phospho-L-seryl-[protein] + ADP + H(+). It catalyses the reaction L-threonyl-[protein] + ATP = O-phospho-L-threonyl-[protein] + ADP + H(+). The protein is Putative serine/threonine-protein kinase R517/R518 of Acanthamoeba polyphaga mimivirus (APMV).